We begin with the raw amino-acid sequence, 189 residues long: Photosystem I assembly protein Ycf4 (189 aa).

The next 2 helical transmembrane spans lie at 31 to 51 (TVIL…YFGF) and 70 to 90 (VMSF…LTII).

Belongs to the Ycf4 family.

It localises to the plastid. The protein resides in the chloroplast thylakoid membrane. Seems to be required for the assembly of the photosystem I complex. This is Photosystem I assembly protein Ycf4 from Chlorokybus atmophyticus (Soil alga).